A 382-amino-acid polypeptide reads, in one-letter code: Putative acetyl-CoA C-acetyltransferase VraB (382 aa).

The Acyl-thioester intermediate role is filled by cysteine 86. Histidine 338 acts as the Proton acceptor in catalysis.

It belongs to the thiolase-like superfamily. Thiolase family.

The sequence is that of Putative acetyl-CoA C-acetyltransferase VraB (vraB) from Staphylococcus epidermidis (strain ATCC 12228 / FDA PCI 1200).